The following is a 227-amino-acid chain: KH domain-containing protein MJ0443 (227 aa).

2 KH domains span residues 14–77 (KSIE…RDIV) and 106–163 (DYAS…KEAV).

This chain is KH domain-containing protein MJ0443, found in Methanocaldococcus jannaschii (strain ATCC 43067 / DSM 2661 / JAL-1 / JCM 10045 / NBRC 100440) (Methanococcus jannaschii).